A 273-amino-acid polypeptide reads, in one-letter code: Cell division protein FtsQ (273 aa).

Residues 1–10 (MWNDARTINL) lie on the Cytoplasmic side of the membrane. The chain crosses the membrane as a helical span at residues 11 to 31 (IANTLAVLAVAAMLLAGVAWV). The Periplasmic segment spans residues 32–273 (AQRPYFTLAA…HSKSKPAKKR (242 aa)). Positions 37–110 (FTLAAIEIES…NTLRVRVEEQ (74 aa)) constitute a POTRA domain.

It belongs to the FtsQ/DivIB family. FtsQ subfamily. Part of a complex composed of FtsB, FtsL and FtsQ.

The protein resides in the cell inner membrane. Its function is as follows. Essential cell division protein. May link together the upstream cell division proteins, which are predominantly cytoplasmic, with the downstream cell division proteins, which are predominantly periplasmic. May control correct divisome assembly. This chain is Cell division protein FtsQ, found in Bordetella pertussis (strain Tohama I / ATCC BAA-589 / NCTC 13251).